Here is a 283-residue protein sequence, read N- to C-terminus: Thymidylate synthase (283 aa).

Arg-22 contacts dUMP. Residue Cys-160 is the Nucleophile of the active site. DUMP contacts are provided by residues 180 to 183, Asn-191, and 221 to 223; these read RSCD and HIY. A (6R)-5,10-methylene-5,6,7,8-tetrahydrofolate-binding site is contributed by Asp-183. Ser-282 contacts (6R)-5,10-methylene-5,6,7,8-tetrahydrofolate.

This sequence belongs to the thymidylate synthase family. Bacterial-type ThyA subfamily. In terms of assembly, homodimer.

It is found in the cytoplasm. It carries out the reaction dUMP + (6R)-5,10-methylene-5,6,7,8-tetrahydrofolate = 7,8-dihydrofolate + dTMP. Its pathway is pyrimidine metabolism; dTTP biosynthesis. Its function is as follows. Catalyzes the reductive methylation of 2'-deoxyuridine-5'-monophosphate (dUMP) to 2'-deoxythymidine-5'-monophosphate (dTMP) while utilizing 5,10-methylenetetrahydrofolate (mTHF) as the methyl donor and reductant in the reaction, yielding dihydrofolate (DHF) as a by-product. This enzymatic reaction provides an intracellular de novo source of dTMP, an essential precursor for DNA biosynthesis. This is Thymidylate synthase from Vibrio cholerae serotype O1 (strain ATCC 39315 / El Tor Inaba N16961).